A 737-amino-acid polypeptide reads, in one-letter code: Transcription termination factor Rho (737 aa).

The interval 1-396 (MSGPCSAHRV…ENSYLPDPTD (396 aa)) is disordered. 3 stretches are compositionally biased toward low complexity: residues 16 to 28 (RPTIRSPRITRSS), 62 to 86 (ASRASSESRSESGSGLSAEGSGSDA), and 101 to 111 (DAESAPTAADT). Composition is skewed to basic and acidic residues over residues 145–175 (PRAESPRSEPRTESRPEPRAENGSETRHESR), 196–256 (SMER…DRRD), 266–279 (GRPDNRGPGGDRHQ), and 286–324 (DRSHDRGPDRNNERAFDRPERPDRQGESSDRFDSQDRGG). Over residues 328-339 (RNGRRGRNRFRR) the composition is skewed to basic residues. Positions 347–360 (APISGSHAPSQGSP) are enriched in polar residues. A Rho RNA-BD domain is found at 367–439 (EGTMAGWFDP…IEVQTLNDGS (73 aa)). The segment covering 376 to 387 (PSRDGGFLRRPE) has biased composition (basic and acidic residues). ATP-binding positions include 487 to 492 (GYGQRA), 499 to 504 (RAGKTT), and Arg-530.

The protein belongs to the Rho family. In terms of assembly, homohexamer. The homohexamer assembles into an open ring structure.

Functionally, facilitates transcription termination by a mechanism that involves Rho binding to the nascent RNA, activation of Rho's RNA-dependent ATPase activity, and release of the mRNA from the DNA template. The sequence is that of Transcription termination factor Rho from Gemmatimonas aurantiaca (strain DSM 14586 / JCM 11422 / NBRC 100505 / T-27).